A 792-amino-acid chain; its full sequence is Ubiquitin carboxyl-terminal hydrolase 10 (792 aa).

At Ala-2 the chain carries N-acetylalanine. The interval 2–99 is interaction with p53/TP53; that stretch reads ALHNPQYIFG…ILGCTTSKKI (98 aa). The segment at 6-21 is G3BP1-binding; the sequence is PQYIFGDFSPDEFNQF. Phosphothreonine is present on Thr-24. Residues 126–164 are disordered; it reads SNAEAETLENDSGAGGLGQRERKKKKKRPPGYYSYLKDG. Residues Ser-208 and Ser-223 each carry the phosphoserine modification. Basic and acidic residues predominate over residues 300 to 309; that stretch reads DEGADLDPAK. A disordered region spans residues 300–323; it reads DEGADLDPAKPESQSPPAESALSA. Ser-314 is subject to Phosphoserine. A Phosphoserine; by ATM modification is found at Ser-330. Positions 350–369 are disordered; it reads PMAYVETKCSPPVPSPLASE. Ser-359 and Ser-364 each carry phosphoserine. The USP domain maps to 409–789; the sequence is RGLINKGNWC…TAYLLYYRRV (381 aa). Catalysis depends on Cys-418, which acts as the Nucleophile. Phosphoserine is present on Ser-541. A disordered region spans residues 542 to 580; that stretch reads PTHEKHSVSNGPRSDLIEDEELEDTGKGSEDEWEQVGPK. At Thr-566 the chain carries Phosphothreonine. Phosphoserine is present on Ser-570. His-743 functions as the Proton acceptor in the catalytic mechanism.

This sequence belongs to the peptidase C19 family. USP10 subfamily. As to quaternary structure, found in a deubiquitination complex with TANK, USP10 and ZC3H12A; this complex inhibits genotoxic stress- or interleukin-1-beta (IL1B)-mediated NF-kappa-B activation by promoting IKBKG or TRAF6 deubiquitination. Interacts with IKBKG; this interaction increases in response to DNA damage. Interacts with TANK; this interaction increases in response to DNA damage. Interacts with TRAF6; this interaction increases in response to DNA damage. Interacts with ZC3H12A; this interaction increases in response to DNA damage. Interacts with G3BP1 (via NTF2 domain) and G3BP2 (via NTF2 domain); inhibiting stress granule formation. Post-translationally, phosphorylated by ATM following DNA damage, leading to stabilization and translocation it to the nucleus. In terms of processing, ubiquitinated. Deubiquitinated by USP13.

The protein resides in the cytoplasm. Its subcellular location is the nucleus. It is found in the early endosome. The enzyme catalyses Thiol-dependent hydrolysis of ester, thioester, amide, peptide and isopeptide bonds formed by the C-terminal Gly of ubiquitin (a 76-residue protein attached to proteins as an intracellular targeting signal).. With respect to regulation, specifically inhibited by spautin-1 (specific and potent autophagy inhibitor-1), a derivative of MBCQ that binds to USP10 and inhibits deubiquitinase activity. Regulated by PIK3C3/VPS34-containing complexes. Hydrolase that can remove conjugated ubiquitin from target proteins such as p53/TP53, RPS2/us5, RPS3/us3, RPS10/eS10, BECN1, SNX3 and CFTR. Acts as an essential regulator of p53/TP53 stability: in unstressed cells, specifically deubiquitinates p53/TP53 in the cytoplasm, leading to counteract MDM2 action and stabilize p53/TP53. Following DNA damage, translocates to the nucleus and deubiquitinates p53/TP53, leading to regulate the p53/TP53-dependent DNA damage response. Component of a regulatory loop that controls autophagy and p53/TP53 levels: mediates deubiquitination of BECN1, a key regulator of autophagy, leading to stabilize the PIK3C3/VPS34-containing complexes. In turn, PIK3C3/VPS34-containing complexes regulate USP10 stability, suggesting the existence of a regulatory system by which PIK3C3/VPS34-containing complexes regulate p53/TP53 protein levels via USP10 and USP13. Does not deubiquitinate MDM2. Plays a key role in 40S ribosome subunit recycling when a ribosome has stalled during translation: acts both by inhibiting formation of stress granules, which store stalled translation pre-initiation complexes, and mediating deubiquitination of 40S ribosome subunits. Acts as a negative regulator of stress granules formation by lowering G3BP1 and G3BP2 valence, thereby preventing G3BP1 and G3BP2 ability to undergo liquid-liquid phase separation (LLPS) and assembly of stress granules. Promotes 40S ribosome subunit recycling following ribosome dissociation in response to ribosome stalling by mediating deubiquitination of 40S ribosomal proteins RPS2/us5, RPS3/us3 and RPS10/eS10, thereby preventing their degradation by the proteasome. Part of a ribosome quality control that takes place when ribosomes have stalled during translation initiation (iRQC): USP10 acts by removing monoubiquitination of RPS2/us5 and RPS3/us3, promoting 40S ribosomal subunit recycling. Deubiquitinates CFTR in early endosomes, enhancing its endocytic recycling. Involved in a TANK-dependent negative feedback response to attenuate NF-kappa-B activation via deubiquitinating IKBKG or TRAF6 in response to interleukin-1-beta (IL1B) stimulation or upon DNA damage. Deubiquitinates TBX21 leading to its stabilization. Plays a negative role in the RLR signaling pathway upon RNA virus infection by blocking the RIGI-mediated MAVS activation. Mechanistically, removes the unanchored 'Lys-63'-linked polyubiquitin chains of MAVS to inhibit its aggregation, essential for its activation. The protein is Ubiquitin carboxyl-terminal hydrolase 10 (Usp10) of Mus musculus (Mouse).